Reading from the N-terminus, the 216-residue chain is Adenylate kinase (216 aa).

ATP is bound at residue 10–15; it reads GAGKGT. Residues 30–59 form an NMP region; the sequence is STGDIFRANIKEKTPLGIEAKRYIDNGQLV. AMP-binding positions include T31, R36, 57–59, 85–88, and Q92; these read QLV and GFPR. Residues 126-163 form an LID region; it reads GRRVCTSCGASYHIRFNPPKIEGKCDICDNELIQRKDD. R127 is a binding site for ATP. 2 residues coordinate Zn(2+): C130 and C133. 136–137 is a binding site for ATP; sequence SY. Positions 150 and 153 each coordinate Zn(2+). AMP is bound by residues R160 and R171. E199 contributes to the ATP binding site.

Belongs to the adenylate kinase family. Monomer.

It localises to the cytoplasm. It carries out the reaction AMP + ATP = 2 ADP. It participates in purine metabolism; AMP biosynthesis via salvage pathway; AMP from ADP: step 1/1. In terms of biological role, catalyzes the reversible transfer of the terminal phosphate group between ATP and AMP. Plays an important role in cellular energy homeostasis and in adenine nucleotide metabolism. The chain is Adenylate kinase from Clostridium botulinum (strain ATCC 19397 / Type A).